Reading from the N-terminus, the 123-residue chain is Double-stranded DNA deaminase immunity protein (123 aa).

As to quaternary structure, the toxic domain forms a 1:1 complex with the DddI immunity protein. This protein blocks the active site of the toxin.

Immunity protein component of a toxin-immunity protein module, which functions as a cellular contact-dependent growth inhibition (CDI) system. CDI modules allow bacteria to communicate with and inhibit the growth of closely related neighboring bacteria in a contact-dependent fashion. Bacteria that have this module inhibit or kill bacteria without it, giving them a growth advantage. Specifically inhibits the toxic activity of cognate toxin DddA (C-terminal 163 residue fragment) upon expression in E.coli. This is Double-stranded DNA deaminase immunity protein from Burkholderia cenocepacia (strain H111).